Here is a 64-residue protein sequence, read N- to C-terminus: UPF0337 protein SAR0874 (64 aa).

Positions 1 to 40 are disordered; it reads MADESKFEQAKGNVKETVGNVTDNKNLENEGKEDKASGKA. The segment covering 25–40 has biased composition (basic and acidic residues); it reads KNLENEGKEDKASGKA.

Belongs to the UPF0337 (CsbD) family.

This is UPF0337 protein SAR0874 from Staphylococcus aureus (strain MRSA252).